We begin with the raw amino-acid sequence, 455 residues long: GTPase Der (455 aa).

2 consecutive EngA-type G domains span residues 4–169 and 178–353; these read PVVA…PPKD and IQMA…EQHR. GTP is bound by residues 10-17, 57-61, 120-123, 184-191, 231-235, and 296-299; these read GRPNVGKS, DTGGL, NKCE, DTAGI, and NKWD. One can recognise a KH-like domain in the interval 354-439; the sequence is RRVSTSVVNE…PLRLFWRGKQ (86 aa).

The protein belongs to the TRAFAC class TrmE-Era-EngA-EngB-Septin-like GTPase superfamily. EngA (Der) GTPase family. In terms of assembly, associates with the 50S ribosomal subunit.

Functionally, GTPase that plays an essential role in the late steps of ribosome biogenesis. This Synechococcus sp. (strain CC9605) protein is GTPase Der.